The following is a 204-amino-acid chain: Protein XpaC (204 aa).

In double copy it causes aberrant cell morphology, filamentation and inhibits sporulation. Hydrolyzes 5-bromo-4-chloroindolyl phosphate. The polypeptide is Protein XpaC (xpaC) (Bacillus subtilis (strain 168)).